The primary structure comprises 393 residues: Homogentisate phytyltransferase 1, chloroplastic (393 aa).

The transit peptide at 1-36 (MESLLSSSSLVSAAGGFCWKKQNLKLHSLSEIRVLR) directs the protein to the chloroplast. The next 9 helical transmembrane spans lie at 108–128 (TVIG…EKVS), 133–153 (LLFT…IYIV), 170–190 (YLPL…VASF), 205–227 (PLFW…LPLL), 232–252 (FALV…QIAF), 271–291 (LIFA…FKDI), 314–334 (VFWT…LVGA), 338–358 (FIWS…TLWA), and 371–391 (ITSC…LLPF).

The protein belongs to the UbiA prenyltransferase family.

It is found in the plastid. The protein localises to the chloroplast membrane. It catalyses the reaction phytyl diphosphate + homogentisate + H(+) = 2-methyl-6-phytyl-1,4-benzene-1,4-diol + CO2 + diphosphate. It functions in the pathway cofactor biosynthesis; tocopherol biosynthesis. Involved in the synthesis of tocopherol (vitamin E). Catalyzes the condensation of homogentisate and phytyl diphosphate to form dimethylphytylhydrquinone. Low activity with geranylgeranyl diphosphate as substrate, but no activity with farnesyl diphosphate or solanesyl diphosphate. Tocopherol functions to limit lipid oxidation during seed desiccation, quiescence and germination and early seedling development. Protects thylakoid membrane lipids from photooxidation and is required for low-temperature adaptation. The polypeptide is Homogentisate phytyltransferase 1, chloroplastic (HPT1) (Arabidopsis thaliana (Mouse-ear cress)).